We begin with the raw amino-acid sequence, 588 residues long: MPKPLIIFKDFSFQYYSQQTPTLNQINLTIYEGQKVLIVGKNGSGKSTFLKCINGLIPHSYQGKITGTAIIKDKVLTQTNIFDLSLDVGTIMQDTDNQFVGLTVAEDIAFALENDDLPQSEIYQKVNMWAQDLGLQSFLDYKPQELSEGHKQLASMAGVLIYNPSILLFDESLSNLDPVSRAKMTALIKTIHQKYHSTILVIEHYLEDILDDSFDRVIVFEDEKIIYDNSPQKLILENILTKQGIQEPTYISALKKVGINLGSLPYLLNLPALQSLDFVQYFSNQLTNLKKCAISQNDPTQLLPFFPKQFAPFCPILQLQNISYHYESKQPNILNDISLDLFPGKMISIVGKNGSGKSTLAKVICGFSNPQTGTILLNNQDLTHLSLQQRSEKIGFVMQNPHHMISQKTVFEEVALGLLGKQLSLTEIKTKVHAILKTCNLDCFVNRPISALSFGQKKRLTIASILVMQPQILILDEPTIGQDLKHHTQIMTFLQKLNNKGITIIIITHDMSLMLNYTQRTLVLEQGKIIANTTPLKIFTDMSLMQKTSLNPISLIVLINKLPFTSEQKNVLLTQMLAFLKEDCCYGK.

2 ABC transporter domains span residues 6–247 and 317–551; these read IIFK…GIQE and LQLQ…TSLN. ATP contacts are provided by residues 40-47 and 351-358; these read GKNGSGKS.

The protein belongs to the ABC transporter superfamily.

It is found in the cell membrane. In terms of biological role, probably part of an ABC transporter complex. Responsible for energy coupling to the transport system. This is Putative ABC transporter ATP-binding protein PAM_020 from Onion yellows phytoplasma (strain OY-M).